We begin with the raw amino-acid sequence, 241 residues long: Ribosome-recycling factor, mitochondrial (241 aa).

It belongs to the RRF family.

The protein localises to the mitochondrion. In terms of biological role, necessary for protein synthesis in mitochondria. Functions as a ribosome recycling factor in mitochondria. The sequence is that of Ribosome-recycling factor, mitochondrial (RRF1) from Kluyveromyces lactis (strain ATCC 8585 / CBS 2359 / DSM 70799 / NBRC 1267 / NRRL Y-1140 / WM37) (Yeast).